A 661-amino-acid chain; its full sequence is Fusaric acid cluster transcription factor FUB12 (661 aa).

The zn(2)-C6 fungal-type DNA-binding region spans 17–48 (CVPCRTRKIKCNAAVVGLPCGSCVSRECPDEC). Disordered regions lie at residues 57–131 (TVKG…RPPG) and 151–185 (SAAQ…QLDD). Residues 73–98 (PDTNGSILSPRQQQLPTNVSRQTTDS) show a composition bias toward polar residues. A compositionally biased stretch (basic and acidic residues) spans 99–109 (SHSDPVEESIH). Residues 110 to 119 (ASHTGSSLRN) are compositionally biased toward polar residues. Over residues 120–129 (DTPHSRDRRP) the composition is skewed to basic and acidic residues.

It is found in the nucleus. Its function is as follows. Transcription factor that is involved in the formation of the two Fusaric acid derivatives, dehydrofusaric acid and fusarinolic acid, serving as a detoxification mechanism. The polypeptide is Fusaric acid cluster transcription factor FUB12 (Gibberella fujikuroi (strain CBS 195.34 / IMI 58289 / NRRL A-6831) (Bakanae and foot rot disease fungus)).